A 525-amino-acid chain; its full sequence is M-phase inducer phosphatase 1 (525 aa).

A Phosphodegron motif is present at residues 73–83 (MGSSESTDSGF). A Phosphoserine; by CHEK1 modification is found at Ser75. Phosphoserine; by NEK11 is present on residues Ser78, Ser81, and Ser87. The residue at position 106 (Ser106) is a Phosphoserine. Phosphoserine; by CHEK1 and CHEK2 is present on Ser123. The KEN box motif lies at 140 to 142 (KEN). Residue Ser177 is modified to Phosphoserine; by CHEK1. 2 disordered regions span residues 179–204 (PARM…PQSP) and 262–308 (SASC…PEKP). A phosphoserine; by CHEK1 and CHEK2 mark is found at Ser279 and Ser293. Positions 294–306 (VAGASPEEAASPE) are enriched in low complexity. Ser322 bears the Phosphoserine mark. Positions 377 to 483 (LIKEFVIIDC…FFLKCQSHCE (107 aa)) constitute a Rhodanese domain. Cys432 is a catalytic residue. A Phosphothreonine; by CHEK1 modification is found at Thr508. A phosphoserine; by PLK3 mark is found at Ser514 and Ser520.

Belongs to the MPI phosphatase family. In terms of assembly, interacts with CCNB1/cyclin B1. Interacts with YWHAE/14-3-3 epsilon when phosphorylated. Interacts with CUL1 specifically when CUL1 is neddylated and active. Interacts with BTRC/BTRCP1 and FBXW11/BTRCP2. Interactions with CUL1, BTRC and FBXW11 are enhanced upon DNA damage. Interacts with HSP90AB1; prevents heat shock-mediated CDC25A degradation and contributes to cell cycle progression. Phosphorylated by CHEK1 on Ser-75, Ser-123, Ser-177, Ser-279, Ser-293 and Thr-508 during checkpoint mediated cell cycle arrest. Also phosphorylated by CHEK2 on Ser-123, Ser-279, and Ser-293 during checkpoint mediated cell cycle arrest. Phosphorylation on Ser-177 and Thr-508 creates binding sites for YWHAE/14-3-3 epsilon which inhibits CDC25A. Phosphorylation on Ser-75, Ser-123, Ser-177, Ser-279 and Ser-293 may also promote ubiquitin-dependent proteolysis of CDC25A by the SCF complex. Phosphorylation of CDC25A at Ser-75 by CHEK1 primes it for subsequent phosphorylation at Ser-78, Ser-81 and Ser-87 by NEK11. Phosphorylation by NEK11 is required for BTRC-mediated polyubiquitination and degradation. Phosphorylation by PIM1 leads to an increase in phosphatase activity. Phosphorylated by PLK3 following DNA damage, leading to promote its ubiquitination and degradation. Post-translationally, ubiquitinated by the anaphase promoting complex/cyclosome (APC/C) ubiquitin ligase complex that contains FZR1/CDH1 during G1 phase leading to its degradation by the proteasome. Ubiquitinated by a SCF complex containing BTRC and FBXW11 during S phase leading to its degradation by the proteasome. Deubiquitination by USP17L2/DUB3 leads to its stabilization.

It carries out the reaction O-phospho-L-tyrosyl-[protein] + H2O = L-tyrosyl-[protein] + phosphate. Stimulated by B-type cyclins. Stimulated by PIM1-mediated phosphorylation. In terms of biological role, tyrosine protein phosphatase which functions as a dosage-dependent inducer of mitotic progression. Directly dephosphorylates CDK1 and stimulates its kinase activity. Also dephosphorylates CDK2 in complex with cyclin-E, in vitro. The sequence is that of M-phase inducer phosphatase 1 (CDC25A) from Bos taurus (Bovine).